Here is a 900-residue protein sequence, read N- to C-terminus: E3 ubiquitin-protein ligase BRE1-like 2 (900 aa).

The disordered stretch occupies residues 1 to 31 (MENQESDEPMQKKPHLLDSVSPNSMARNSSP). Residues 20-31 (VSPNSMARNSSP) show a composition bias toward polar residues. Coiled-coil stretches lie at residues 63 to 96 (TVLQ…LQLN), 217 to 300 (EDAT…KDAA), 437 to 660 (SRIE…AEME), and 706 to 737 (SEKQ…EQMK). Residues 848 to 887 (CGVCFDRPKEVVIVKCYHLFCQQCIQRSLEIRHRKCPGCG) form an RING-type zinc finger.

Belongs to the BRE1 family. As to quaternary structure, may act as a tetramer consisting of two copies of HUB1 and two copies of HUB2. As to expression, ubiquitously expressed.

Its subcellular location is the nucleus. The catalysed reaction is S-ubiquitinyl-[E2 ubiquitin-conjugating enzyme]-L-cysteine + [acceptor protein]-L-lysine = [E2 ubiquitin-conjugating enzyme]-L-cysteine + N(6)-ubiquitinyl-[acceptor protein]-L-lysine.. The protein operates within protein modification; protein ubiquitination. In terms of biological role, E3 ubiquitin-protein ligase that monoubiquitinates H2B to form H2BK143ub1. H2BK143ub1 gives a specific tag for epigenetic transcriptional activation and is also prerequisite for H3K4me and maybe H3K79me. It thereby plays a central role in histone code and gene regulation. Forms a ubiquitin ligase complex in cooperation with the E2 enzyme UBC2/RAD6. The protein is E3 ubiquitin-protein ligase BRE1-like 2 (HUB2) of Arabidopsis thaliana (Mouse-ear cress).